The following is an 870-amino-acid chain: DNA polymerase kappa (870 aa).

Residues Ile103–Gly358 form the UmuC domain. Positions 107, 198, and 199 each coordinate Mg(2+). 2 UBZ4-type zinc fingers span residues Ile621 to Ser651 and Ala776 to Phe806. Residues Cys624, Cys627, His642, Cys646, Cys779, Cys782, His797, and Cys801 each contribute to the Zn(2+) site. A disordered region spans residues Asn816–Pro858.

Belongs to the DNA polymerase type-Y family. In terms of assembly, interacts with REV1. Interacts with PCNA. Requires Mg(2+) as cofactor. The cofactor is Mn(2+). In terms of tissue distribution, detected at low levels in testis, spleen, prostate and ovary. Detected at very low levels in kidney, colon, brain, heart, liver, lung, placenta, pancreas and peripheral blood leukocytes.

It is found in the nucleus. The enzyme catalyses DNA(n) + a 2'-deoxyribonucleoside 5'-triphosphate = DNA(n+1) + diphosphate. Functionally, DNA polymerase specifically involved in DNA repair. Plays an important role in translesion synthesis, where the normal high-fidelity DNA polymerases cannot proceed and DNA synthesis stalls. Depending on the context, it inserts the correct base, but causes frequent base transitions, transversions and frameshifts. Lacks 3'-5' proofreading exonuclease activity. Forms a Schiff base with 5'-deoxyribose phosphate at abasic sites, but does not have lyase activity. The polypeptide is DNA polymerase kappa (POLK) (Homo sapiens (Human)).